A 5488-amino-acid polypeptide reads, in one-letter code: Polyketide synthase PksN (5488 aa).

The interval 3–301 is condensation; the sequence is RQLKSPLSEG…NMMAVRSKNI (299 aa). The stretch at 165–205 is one WD 1 repeat; that stretch reads QQPSTADYYDFVDWENRMLTGREGEEHLAYWKEQLSGSLPV. Positions 493–903 are adenylation; the sequence is TYKEVDEKST…EFPGILDQAV (411 aa). Residues 965–1006 form a WD 2 repeat; it reads RKELEKREIVFNRRKPNHLQLTEIEDQVLRIWEETLKVSGFG. In terms of domain architecture, Carrier 1 spans 983 to 1058; the sequence is LQLTEIEDQV…AISEYILEMK (76 aa). Residue S1018 is modified to O-(pantetheine 4'-phosphoryl)serine. Residues 1089 to 1515 form the Ketosynthase family 3 (KS3) 1 domain; that stretch reads DDSVAIVGIS…GTNAHAIFEQ (427 aa). Residues C1261, H1397, and H1437 each act as for beta-ketoacyl synthase 1 activity in the active site. Positions 1700 to 1826 are N-terminal hotdog fold 1; it reads HPLVHHNTSV…GKAELIQLKR (127 aa). The 293-residue stretch at 1700–1992 folds into the PKS/mFAS DH 1 domain; it reads HPLVHHNTSV…TRVMEADIQT (293 aa). H1729 acts as the Proton acceptor; for dehydratase activity 1 in catalysis. The segment at 1840–1992 is C-terminal hotdog fold 1; sequence DQSKMDAASF…TRVMEADIQT (153 aa). D1900 (proton donor; for dehydratase activity 1) is an active-site residue. A WD 3 repeat occupies 2165 to 2204; that stretch reads KQAKGDGSKPWKDNGVYLISGGAGGLGHIFAKEIAEQTKN. In terms of domain architecture, Carrier 2 spans 2448–2525; that stretch reads SLLDKVKAML…AFGKHLSEEY (78 aa). At S2485 the chain carries O-(pantetheine 4'-phosphoryl)serine. Positions 2576-3012 constitute a Ketosynthase family 3 (KS3) 2 domain; sequence PEPIAIVGIS…GVNAHVIIEE (437 aa). Active-site for beta-ketoacyl synthase 2 activity residues include C2747, H2882, and H2928. The stretch at 3038–3109 forms a coiled coil; that stretch reads KNEARLKEHA…AAEKSGVEDV (72 aa). The interval 3207–3332 is N-terminal hotdog fold 2; that stretch reads HPLMHQNTSN…GSAVLNPAEN (126 aa). In terms of domain architecture, PKS/mFAS DH 2 spans 3207–3492; sequence HPLMHQNTSN…FRAAEGGSGS (286 aa). Catalysis depends on H3236, which acts as the Proton acceptor; for dehydratase activity 2. The segment at 3346–3492 is C-terminal hotdog fold 2; that stretch reads QESHFSVNEV…FRAAEGGSGS (147 aa). Catalysis depends on D3408, which acts as the Proton donor; for dehydratase activity 2. Residues 3626 to 3655 adopt a coiled-coil conformation; sequence DSHENVESVIEKLKENKRHTEDQHIKYEKG. The WD 4 repeat unit spans residues 3666-3705; sequence QIDDREISMPWRDKGVYLITGGAGGLGFIFAKEIARQAEQ. Residues 3952-4026 enclose the Carrier 3 domain; sequence DHIQEVLKQT…AFAGYLSEEY (75 aa). At S3986 the chain carries O-(pantetheine 4'-phosphoryl)serine. The 436-residue stretch at 4076–4511 folds into the Ketosynthase family 3 (KS3) 3 domain; the sequence is PEPIAIVGMS…GVNAHVVIEE (436 aa). Residues C4245, H4380, and H4427 each act as for beta-ketoacyl synthase 3 activity in the active site. The interval 4706–4830 is N-terminal hotdog fold 3; that stretch reads HPLIHVNTSD…GSASIRGAGD (125 aa). Positions 4706–4988 constitute a PKS/mFAS DH 3 domain; the sequence is HPLIHVNTSD…SRLLEEGIQP (283 aa). H4735 functions as the Proton acceptor; for dehydratase activity 3 in the catalytic mechanism. Residues 4844 to 4988 are C-terminal hotdog fold 3; that stretch reads SLSTLSHDQC…SRLLEEGIQP (145 aa). D4906 acts as the Proton donor; for dehydratase activity 3 in catalysis. The stretch at 5206-5244 is one WD 5 repeat; the sequence is HNNQPVHTKYKHGGVYVVIGGAGGIGEAWSEYMIRTYQA. Residues 5275–5303 adopt a coiled-coil conformation; sequence IQADAANREELERAYETMKQTHREINGII.

This sequence belongs to the ATP-dependent AMP-binding enzyme family. Pantetheine 4'-phosphate serves as cofactor.

The protein localises to the cytoplasm. Its pathway is antibiotic biosynthesis; bacillaene biosynthesis. Functionally, involved in some intermediate steps for the synthesis of the antibiotic polyketide bacillaene which is involved in secondary metabolism. This Bacillus subtilis (strain 168) protein is Polyketide synthase PksN (pksN).